We begin with the raw amino-acid sequence, 319 residues long: MKRIGVLTSGGDSPGMNAAIRAVVRKAIYHGLEVYGIYHGYAGLIAGQIKKLEIGDVGDIIHRGGTMLYTARCPEFKTLEGQLKGIEQLKKHGIEGLVVIGGDGSYQGAKKLTEHGYPCVGVPGTIDNDIPGTDFTIGFDTALNTVIDAIDKIRDTATSHERTYVIEVMGRHAGDIALWAGLAGGAESILIPEADYDMDEIVSRLKRGHERGKKHSIIIVAEGVGSGVDFGKRIEEATGLETRVTVLGHVQRGGSPTAFDRVLASRLGARAVELLIEGKGGRCVGIQNNQLVDHDIIEALAQTHTVDQKMYQLSKELSI.

An ATP-binding site is contributed by G11. Residue 21-25 (RAVVR) participates in ADP binding. ATP-binding positions include 72-73 (RC) and 102-105 (GDGS). A Mg(2+)-binding site is contributed by D103. A substrate-binding site is contributed by 125-127 (TID). D127 acts as the Proton acceptor in catalysis. R154 contacts ADP. Substrate is bound by residues R162 and 169–171 (MGR). Residues 185-187 (GAE), R211, and 213-215 (KKH) each bind ADP. Residues E222, R243, and 249–252 (HVQR) contribute to the substrate site.

The protein belongs to the phosphofructokinase type A (PFKA) family. ATP-dependent PFK group I subfamily. Prokaryotic clade 'B1' sub-subfamily. As to quaternary structure, homotetramer. It depends on Mg(2+) as a cofactor.

It is found in the cytoplasm. The enzyme catalyses beta-D-fructose 6-phosphate + ATP = beta-D-fructose 1,6-bisphosphate + ADP + H(+). It functions in the pathway carbohydrate degradation; glycolysis; D-glyceraldehyde 3-phosphate and glycerone phosphate from D-glucose: step 3/4. Allosterically activated by ADP and other diphosphonucleosides, and allosterically inhibited by phosphoenolpyruvate. Catalyzes the phosphorylation of D-fructose 6-phosphate to fructose 1,6-bisphosphate by ATP, the first committing step of glycolysis. This chain is ATP-dependent 6-phosphofructokinase, found in Anoxybacillus flavithermus (strain DSM 21510 / WK1).